Consider the following 444-residue polypeptide: ATP-dependent protease ATPase subunit HslU (444 aa).

Residues isoleucine 20, 62–67 (GVGKTE), aspartate 257, glutamate 322, and arginine 394 contribute to the ATP site.

The protein belongs to the ClpX chaperone family. HslU subfamily. As to quaternary structure, a double ring-shaped homohexamer of HslV is capped on each side by a ring-shaped HslU homohexamer. The assembly of the HslU/HslV complex is dependent on binding of ATP.

It localises to the cytoplasm. In terms of biological role, ATPase subunit of a proteasome-like degradation complex; this subunit has chaperone activity. The binding of ATP and its subsequent hydrolysis by HslU are essential for unfolding of protein substrates subsequently hydrolyzed by HslV. HslU recognizes the N-terminal part of its protein substrates and unfolds these before they are guided to HslV for hydrolysis. The protein is ATP-dependent protease ATPase subunit HslU of Bordetella avium (strain 197N).